Consider the following 72-residue polypeptide: SRY-related protein MG43 (72 aa).

A DNA-binding region (HMG box) is located at residues 1-69 (VKRPMNAFMV…KHMADYPDYK (69 aa)).

It is found in the nucleus. In Tarentola mauritanica (Common wall gecko), this protein is SRY-related protein MG43.